A 185-amino-acid polypeptide reads, in one-letter code: Ribosome-recycling factor (185 aa).

It belongs to the RRF family.

The protein localises to the cytoplasm. Responsible for the release of ribosomes from messenger RNA at the termination of protein biosynthesis. May increase the efficiency of translation by recycling ribosomes from one round of translation to another. This is Ribosome-recycling factor from Baumannia cicadellinicola subsp. Homalodisca coagulata.